Here is a 474-residue protein sequence, read N- to C-terminus: Serine/threonine-protein kinase ksp1 (474 aa).

A Protein kinase domain is found at 9-280; that stretch reads YKVERPLNKG…EAVLAVTKWT (272 aa). ATP contacts are provided by residues 15-23 and Lys43; that span reads LNKGSYGTV. Asp137 functions as the Proton acceptor in the catalytic mechanism. Residues 345–373 are disordered; it reads VDENISTSSSPRSPASLAPVNNSERSYDS. Over residues 350 to 363 the composition is skewed to low complexity; sequence STSSSPRSPASLAP. Ser353, Ser354, Ser357, Ser378, Ser404, and Ser413 each carry phosphoserine.

The protein belongs to the protein kinase superfamily. Ser/Thr protein kinase family.

It localises to the cytoplasm. It is found in the nucleus. The enzyme catalyses L-seryl-[protein] + ATP = O-phospho-L-seryl-[protein] + ADP + H(+). The catalysed reaction is L-threonyl-[protein] + ATP = O-phospho-L-threonyl-[protein] + ADP + H(+). This chain is Serine/threonine-protein kinase ksp1 (ksp1), found in Schizosaccharomyces pombe (strain 972 / ATCC 24843) (Fission yeast).